The chain runs to 383 residues: 8-amino-7-oxononanoate synthase (383 aa).

Substrate is bound at residue R21. 108-109 (GY) contacts pyridoxal 5'-phosphate. H133 contacts substrate. S179, H207, and T233 together coordinate pyridoxal 5'-phosphate. Residue K236 is modified to N6-(pyridoxal phosphate)lysine. T350 contacts substrate.

The protein belongs to the class-II pyridoxal-phosphate-dependent aminotransferase family. BioF subfamily. Homodimer. Pyridoxal 5'-phosphate serves as cofactor.

The enzyme catalyses 6-carboxyhexanoyl-[ACP] + L-alanine + H(+) = (8S)-8-amino-7-oxononanoate + holo-[ACP] + CO2. It participates in cofactor biosynthesis; biotin biosynthesis. Its function is as follows. Catalyzes the decarboxylative condensation of pimeloyl-[acyl-carrier protein] and L-alanine to produce 8-amino-7-oxononanoate (AON), [acyl-carrier protein], and carbon dioxide. This chain is 8-amino-7-oxononanoate synthase, found in Serratia proteamaculans (strain 568).